We begin with the raw amino-acid sequence, 342 residues long: Anthranilate phosphoribosyltransferase (342 aa).

5-phospho-alpha-D-ribose 1-diphosphate-binding positions include G80, 83–84, T88, 90–93, 108–116, and S120; these read GD, NIST, and KHGNRAVSS. G80 is a binding site for anthranilate. S92 is a Mg(2+) binding site. N111 provides a ligand contact to anthranilate. R166 lines the anthranilate pocket. Mg(2+) is bound by residues D225 and E226.

This sequence belongs to the anthranilate phosphoribosyltransferase family. As to quaternary structure, homodimer. Requires Mg(2+) as cofactor.

The catalysed reaction is N-(5-phospho-beta-D-ribosyl)anthranilate + diphosphate = 5-phospho-alpha-D-ribose 1-diphosphate + anthranilate. It functions in the pathway amino-acid biosynthesis; L-tryptophan biosynthesis; L-tryptophan from chorismate: step 2/5. In terms of biological role, catalyzes the transfer of the phosphoribosyl group of 5-phosphorylribose-1-pyrophosphate (PRPP) to anthranilate to yield N-(5'-phosphoribosyl)-anthranilate (PRA). This Halalkalibacterium halodurans (strain ATCC BAA-125 / DSM 18197 / FERM 7344 / JCM 9153 / C-125) (Bacillus halodurans) protein is Anthranilate phosphoribosyltransferase.